The chain runs to 284 residues: Tropomyosin alpha-1 chain (284 aa).

Met-1 carries the post-translational modification N-acetylmethionine. The segment at 1–38 is disordered; the sequence is MDAIKKKMQMLKLDKENALDRAEQAEADKKAAEDRSKQ. The stretch at 1 to 284 forms a coiled coil; sequence MDAIKKKMQM…DHALNDMTSI (284 aa). Over residues 12–38 the composition is skewed to basic and acidic residues; the sequence is KLDKENALDRAEQAEADKKAAEDRSKQ. Ser-45 is subject to Phosphoserine. The tract at residues 116–136 is disordered; that stretch reads AEKAADESERGMKVIESRAQK. Ser-174, Ser-186, Ser-206, and Ser-252 each carry phosphoserine. Tyr-261 is modified (phosphotyrosine). Residues Ser-271 and Ser-283 each carry the phosphoserine modification.

It belongs to the tropomyosin family. Homodimer. Heterodimer of an alpha (TPM1, TPM3 or TPM4) and a beta (TPM2) chain. Interacts with HRG (via the HRR domain); the interaction contributes to the antiangiogenic properties of the histidine/proline-rich region (HRR) of HRG. Interacts (via N-terminus) with LMOD2 (via N-terminus) and TMOD1 (via N-terminus). Post-translationally, phosphorylated at Ser-283 by DAPK1 in response to oxidative stress and this phosphorylation enhances stress fiber formation in endothelial cells.

It localises to the cytoplasm. It is found in the cytoskeleton. Binds to actin filaments in muscle and non-muscle cells. Plays a central role, in association with the troponin complex, in the calcium dependent regulation of vertebrate striated muscle contraction. Smooth muscle contraction is regulated by interaction with caldesmon. In non-muscle cells is implicated in stabilizing cytoskeleton actin filaments. This chain is Tropomyosin alpha-1 chain (Tpm1), found in Mus musculus (Mouse).